The sequence spans 78 residues: Translation initiation factor IF-1 (78 aa).

The 75-residue stretch at 4-78 (KFNNQAKQDK…LKLGRIIGRK (75 aa)) folds into the S1-like domain.

The protein belongs to the IF-1 family. Component of the 30S ribosomal translation pre-initiation complex which assembles on the 30S ribosome in the order IF-2 and IF-3, IF-1 and N-formylmethionyl-tRNA(fMet); mRNA recruitment can occur at any time during PIC assembly.

It localises to the cytoplasm. Its function is as follows. One of the essential components for the initiation of protein synthesis. Stabilizes the binding of IF-2 and IF-3 on the 30S subunit to which N-formylmethionyl-tRNA(fMet) subsequently binds. Helps modulate mRNA selection, yielding the 30S pre-initiation complex (PIC). Upon addition of the 50S ribosomal subunit IF-1, IF-2 and IF-3 are released leaving the mature 70S translation initiation complex. The polypeptide is Translation initiation factor IF-1 (Mycoplasma pneumoniae (strain ATCC 29342 / M129 / Subtype 1) (Mycoplasmoides pneumoniae)).